The chain runs to 241 residues: General transcription factor IIF subunit 2 (241 aa).

It belongs to the TFIIF beta subunit family. In terms of assembly, heterodimer of an alpha and a beta subunit.

The protein localises to the nucleus. TFIIF is a general transcription initiation factor that binds to RNA polymerase II and helps to recruit it to the initiation complex in collaboration with TFIIB. The polypeptide is General transcription factor IIF subunit 2 (gtf2f2) (Dictyostelium discoideum (Social amoeba)).